The primary structure comprises 262 residues: Large ribosomal subunit protein eL8B (262 aa).

The tract at residues 1-36 (MAPKGKKVAPAPLATKSAKSSESKNPLFESTPKNFG) is disordered.

The protein belongs to the eukaryotic ribosomal protein eL8 family. As to quaternary structure, component of the large ribosomal subunit. Mature ribosomes consist of a small (40S) and a large (60S) subunit. The 40S subunit contains about 32 different proteins and 1 molecule of RNA (18S). The 60S subunit contains 45 different proteins and 3 molecules of RNA (25S, 5.8S and 5S).

It localises to the cytoplasm. In terms of biological role, component of the ribosome, a large ribonucleoprotein complex responsible for the synthesis of proteins in the cell. The small ribosomal subunit (SSU) binds messenger RNAs (mRNAs) and translates the encoded message by selecting cognate aminoacyl-transfer RNA (tRNA) molecules. The large subunit (LSU) contains the ribosomal catalytic site termed the peptidyl transferase center (PTC), which catalyzes the formation of peptide bonds, thereby polymerizing the amino acids delivered by tRNAs into a polypeptide chain. The nascent polypeptides leave the ribosome through a tunnel in the LSU and interact with protein factors that function in enzymatic processing, targeting, and the membrane insertion of nascent chains at the exit of the ribosomal tunnel. The sequence is that of Large ribosomal subunit protein eL8B from Candida albicans (strain SC5314 / ATCC MYA-2876) (Yeast).